The following is a 181-amino-acid chain: Early E3 20.3 kDa glycoprotein (181 aa).

N-linked (GlcNAc...) asparagine; by host glycosylation is found at Asn-29, Asn-57, Asn-70, and Asn-75.

This sequence belongs to the adenoviridae E3_20 family.

In terms of biological role, E3 proteins seem to be dispensable for virus growth in tissue culture cells. They are potentially important for virus growth under special conditions; E3 region may help adenoviruses to evade the immune surveillance of the host. This chain is Early E3 20.3 kDa glycoprotein, found in Homo sapiens (Human).